The sequence spans 714 residues: MEMASAFTLNVRLDNIAIITIDVPDEKMNTLKAEFASQVRAIIKQLRENKELRGVVFISAKPDNFIAGADINMIGNCKTAQEAEALARQGQQLMAEIHALPIPVIAAIHGACLGGGLELALACHGRVCTDDPKTVLGLPEVQLGLLPGSGGTQRLPRLIGVSTALEMILTGKQLRAKQALKLGLVDDVVPHSILLEAAVELVKQDRPSSRPLPVRERILAGPLGRALLFKMVGKKTEHKTQGNYPATERILEVVETGLAQGTSSGYDAEARAFGELAMTPQSQALRSIFFASTDVKKDPGSDAPPAPLNSVGILGGGLMGGGIAYVTACKAGLPVRIKDINPQGINHALKYSWDQLEGKVRRRHLKASERDKQLALISGTTDYRGFAHRDLIIEAVFENLELKQQMVAEVEQNCAAHTIFASNTSSLPIGDIAAHATRPEQVIGLHFFSPVEKMPLVEIIPHAGTSAQTIATTVKLAKKQGKTPIVVRDKAGFYVNRILAPYINEAIRMLTEGERVEHIDAALVKFGFPVGPIQLLDEVGIDTGTKIIPVLEAAYGERFSAPANVVSSILNDDRKGRKNGRGFYLYGQKGRKSKKQVDPAIYPLIGAQGQGRLSAPQVAERCVMLMLNEAVRCVDEQVIRSVRDGDIGAVFGIGFPPFLGGPFRYIDSLGAGEVVAIMQRLATQYGSRFTPCERLVEMSKRGESFWKTTATDLQ.

The segment at 1–190 is enoyl-CoA hydratase; that stretch reads MEMASAFTLN…KLGLVDDVVP (190 aa). A 3-hydroxyacyl-CoA dehydrogenase region spans residues 306–714; the sequence is APLNSVGILG…FWKTTATDLQ (409 aa).

The protein in the N-terminal section; belongs to the enoyl-CoA hydratase/isomerase family. This sequence in the central section; belongs to the 3-hydroxyacyl-CoA dehydrogenase family. In terms of assembly, heterotetramer of two alpha chains (FadJ) and two beta chains (FadI).

It localises to the cytoplasm. The enzyme catalyses a (3S)-3-hydroxyacyl-CoA = a (2E)-enoyl-CoA + H2O. It carries out the reaction a 4-saturated-(3S)-3-hydroxyacyl-CoA = a (3E)-enoyl-CoA + H2O. It catalyses the reaction a (3S)-3-hydroxyacyl-CoA + NAD(+) = a 3-oxoacyl-CoA + NADH + H(+). The catalysed reaction is (3S)-3-hydroxybutanoyl-CoA = (3R)-3-hydroxybutanoyl-CoA. It functions in the pathway lipid metabolism; fatty acid beta-oxidation. Functionally, catalyzes the formation of a hydroxyacyl-CoA by addition of water on enoyl-CoA. Also exhibits 3-hydroxyacyl-CoA epimerase and 3-hydroxyacyl-CoA dehydrogenase activities. In Escherichia coli (strain ATCC 8739 / DSM 1576 / NBRC 3972 / NCIMB 8545 / WDCM 00012 / Crooks), this protein is Fatty acid oxidation complex subunit alpha.